Reading from the N-terminus, the 256-residue chain is Pimeloyl-[acyl-carrier protein] methyl ester esterase (256 aa).

The region spanning 16–240 is the AB hydrolase-1 domain; that stretch reads LVILHGWGVN…PKASHAPFLS (225 aa). Residues W22, 80-81, and 143-147 contribute to the substrate site; these read SL and FLAIQ. S80 acts as the Nucleophile in catalysis. Residues D207 and H235 contribute to the active site. H235 lines the substrate pocket.

Belongs to the AB hydrolase superfamily. Carboxylesterase BioH family. Monomer.

The protein resides in the cytoplasm. The catalysed reaction is 6-carboxyhexanoyl-[ACP] methyl ester + H2O = 6-carboxyhexanoyl-[ACP] + methanol + H(+). Its pathway is cofactor biosynthesis; biotin biosynthesis. In terms of biological role, the physiological role of BioH is to remove the methyl group introduced by BioC when the pimeloyl moiety is complete. It allows to synthesize pimeloyl-ACP via the fatty acid synthetic pathway through the hydrolysis of the ester bonds of pimeloyl-ACP esters. The polypeptide is Pimeloyl-[acyl-carrier protein] methyl ester esterase (Shewanella woodyi (strain ATCC 51908 / MS32)).